The sequence spans 293 residues: Ribosomal protein L11 methyltransferase (293 aa).

S-adenosyl-L-methionine contacts are provided by threonine 145, glycine 166, aspartate 188, and asparagine 230.

It belongs to the methyltransferase superfamily. PrmA family.

It localises to the cytoplasm. The catalysed reaction is L-lysyl-[protein] + 3 S-adenosyl-L-methionine = N(6),N(6),N(6)-trimethyl-L-lysyl-[protein] + 3 S-adenosyl-L-homocysteine + 3 H(+). Its function is as follows. Methylates ribosomal protein L11. This is Ribosomal protein L11 methyltransferase from Sodalis glossinidius (strain morsitans).